Consider the following 288-residue polypeptide: Phosphatidylserine decarboxylase proenzyme (288 aa).

Active-site charge relay system; for autoendoproteolytic cleavage activity residues include Asp90, His147, and Ser252. Ser252 serves as the catalytic Schiff-base intermediate with substrate; via pyruvic acid; for decarboxylase activity. Ser252 bears the Pyruvic acid (Ser); by autocatalysis mark.

Belongs to the phosphatidylserine decarboxylase family. PSD-B subfamily. Prokaryotic type I sub-subfamily. In terms of assembly, heterodimer of a large membrane-associated beta subunit and a small pyruvoyl-containing alpha subunit. Pyruvate serves as cofactor. Post-translationally, is synthesized initially as an inactive proenzyme. Formation of the active enzyme involves a self-maturation process in which the active site pyruvoyl group is generated from an internal serine residue via an autocatalytic post-translational modification. Two non-identical subunits are generated from the proenzyme in this reaction, and the pyruvate is formed at the N-terminus of the alpha chain, which is derived from the carboxyl end of the proenzyme. The autoendoproteolytic cleavage occurs by a canonical serine protease mechanism, in which the side chain hydroxyl group of the serine supplies its oxygen atom to form the C-terminus of the beta chain, while the remainder of the serine residue undergoes an oxidative deamination to produce ammonia and the pyruvoyl prosthetic group on the alpha chain. During this reaction, the Ser that is part of the protease active site of the proenzyme becomes the pyruvoyl prosthetic group, which constitutes an essential element of the active site of the mature decarboxylase.

It localises to the cell membrane. It catalyses the reaction a 1,2-diacyl-sn-glycero-3-phospho-L-serine + H(+) = a 1,2-diacyl-sn-glycero-3-phosphoethanolamine + CO2. It participates in phospholipid metabolism; phosphatidylethanolamine biosynthesis; phosphatidylethanolamine from CDP-diacylglycerol: step 2/2. Its function is as follows. Catalyzes the formation of phosphatidylethanolamine (PtdEtn) from phosphatidylserine (PtdSer). This chain is Phosphatidylserine decarboxylase proenzyme, found in Pseudomonas fluorescens (strain ATCC BAA-477 / NRRL B-23932 / Pf-5).